The chain runs to 261 residues: Glutamate racemase (261 aa).

Residues 7 to 8 (DS) and 39 to 40 (YG) contribute to the substrate site. Cys71 serves as the catalytic Proton donor/acceptor. Position 72–73 (72–73 (NT)) interacts with substrate. The active-site Proton donor/acceptor is Cys184. 185-186 (TH) lines the substrate pocket.

Belongs to the aspartate/glutamate racemases family.

It carries out the reaction L-glutamate = D-glutamate. It functions in the pathway cell wall biogenesis; peptidoglycan biosynthesis. Provides the (R)-glutamate required for cell wall biosynthesis. This chain is Glutamate racemase, found in Aliarcobacter butzleri (strain RM4018) (Arcobacter butzleri).